The primary structure comprises 128 residues: Leucine-rich single-pass membrane protein 1 (128 aa).

Residue Ser-24 is modified to Phosphoserine. The chain crosses the membrane as a helical span at residues 65–85 (VGLIIVLIISLALVSFVIFLI). Residues 87–111 (QTENKMEDVSRRLAAEGKDIDDLKK) are a coiled coil.

It is found in the membrane. This is Leucine-rich single-pass membrane protein 1 (LSMEM1) from Bos taurus (Bovine).